The sequence spans 385 residues: Putative 8-amino-7-oxononanoate synthase (385 aa).

Arginine 22 is a binding site for substrate. 109–110 (GY) provides a ligand contact to pyridoxal 5'-phosphate. Histidine 134 contacts substrate. Pyridoxal 5'-phosphate contacts are provided by residues serine 182, 207 to 210 (DEAH), and 238 to 241 (TLSK). At lysine 241 the chain carries N6-(pyridoxal phosphate)lysine. Position 353 (threonine 353) interacts with substrate.

This sequence belongs to the class-II pyridoxal-phosphate-dependent aminotransferase family. BioF subfamily. Homodimer. The cofactor is pyridoxal 5'-phosphate.

The enzyme catalyses 6-carboxyhexanoyl-[ACP] + L-alanine + H(+) = (8S)-8-amino-7-oxononanoate + holo-[ACP] + CO2. The protein operates within cofactor biosynthesis; biotin biosynthesis. Catalyzes the decarboxylative condensation of pimeloyl-[acyl-carrier protein] and L-alanine to produce 8-amino-7-oxononanoate (AON), [acyl-carrier protein], and carbon dioxide. The chain is Putative 8-amino-7-oxononanoate synthase (bioF) from Microcystis aeruginosa (strain NIES-843 / IAM M-2473).